We begin with the raw amino-acid sequence, 315 residues long: Putative steroid dehydrogenase 3 (315 aa).

NADP(+) is bound at residue 47 to 76 (ASWAVITGGTDGIGKSFSFELAKRGFNIYI). Tyr202 is an active-site residue.

The protein belongs to the short-chain dehydrogenases/reductases (SDR) family. 17-beta-HSD 3 subfamily.

The protein is Putative steroid dehydrogenase 3 (stdh-3) of Caenorhabditis elegans.